A 271-amino-acid polypeptide reads, in one-letter code: Formamidopyrimidine-DNA glycosylase (271 aa).

The active-site Schiff-base intermediate with DNA is the P2. E3 acts as the Proton donor in catalysis. K58 serves as the catalytic Proton donor; for beta-elimination activity. DNA contacts are provided by H92, R111, and K152. The FPG-type zinc-finger motif lies at 237–271 (YVYGKVQKPCKICNNIITLIRQNGRSTYFCNACQN). The active-site Proton donor; for delta-elimination activity is the R261.

Belongs to the FPG family. As to quaternary structure, monomer. Zn(2+) is required as a cofactor.

It catalyses the reaction Hydrolysis of DNA containing ring-opened 7-methylguanine residues, releasing 2,6-diamino-4-hydroxy-5-(N-methyl)formamidopyrimidine.. It carries out the reaction 2'-deoxyribonucleotide-(2'-deoxyribose 5'-phosphate)-2'-deoxyribonucleotide-DNA = a 3'-end 2'-deoxyribonucleotide-(2,3-dehydro-2,3-deoxyribose 5'-phosphate)-DNA + a 5'-end 5'-phospho-2'-deoxyribonucleoside-DNA + H(+). Involved in base excision repair of DNA damaged by oxidation or by mutagenic agents. Acts as a DNA glycosylase that recognizes and removes damaged bases. Has a preference for oxidized purines, such as 7,8-dihydro-8-oxoguanine (8-oxoG). Has AP (apurinic/apyrimidinic) lyase activity and introduces nicks in the DNA strand. Cleaves the DNA backbone by beta-delta elimination to generate a single-strand break at the site of the removed base with both 3'- and 5'-phosphates. This chain is Formamidopyrimidine-DNA glycosylase, found in Wolbachia sp. subsp. Drosophila simulans (strain wRi).